The primary structure comprises 430 residues: Multisubstrate adapter protein soc-1 (430 aa).

The region spanning 7–133 (NIILEGSLKR…WVNEICKLCK (127 aa)) is the PH domain. The span at 192 to 222 (SHNSLPSNPNYNNLPDPLESSRSETSSMYSS) shows a compositional bias: low complexity. Disordered regions lie at residues 192–246 (SHNS…TRHT), 275–303 (EDAE…SEGF), and 315–377 (RRAP…RNLD). Residues 341–369 (RNLSRNGVNENGNYSATFSSRTSNYQQSE) are compositionally biased toward polar residues.

In terms of assembly, interacts (via C-terminus) with sem-5 (probably via SH3 domain 2). Interacts with nicotinic acetylcholine receptor. May be phosphorylated.

Functionally, adapter protein which modulates signaling mediated by several receptor tyrosine kinases. Plays a role in fluid homeostasis, probably downstream of receptor egl-15 and upstream of let-60/Ras. Involved in nicotinic acetylcholine receptor (nAChR)-mediated sensitivity to nicotine and levamisole and gamma-aminobutyric acid (GABA)receptor-mediated sensitivity to muscimol. Regulates synaptic levels of nAchR receptor subunit lev-1 and unc-38, and GABA receptor subunit unc-49 in the nerve cord, probably downstream of egl-15. Regulates motility. During the formation of neuromuscular junctions at the larval stage, down-regulates membrane protrusion from body wall muscles, probably downstream of egl-15. Promotes vulva induction and down-regulates fertility, probably downstream of receptor let-23. Down-regulates daf-2-mediated repression of dauer formation and positively regulates daf-2-mediated aging. May be involved in the recruitment of phosphatase ptp-2 to egl-15. The chain is Multisubstrate adapter protein soc-1 from Caenorhabditis elegans.